Consider the following 50-residue polypeptide: Large ribosomal subunit protein bL32 (50 aa).

Residues methionine 1–lysine 26 show a composition bias toward basic residues. Residues methionine 1 to asparagine 50 are disordered.

Belongs to the bacterial ribosomal protein bL32 family.

This chain is Large ribosomal subunit protein bL32, found in Aliarcobacter butzleri (strain RM4018) (Arcobacter butzleri).